A 1031-amino-acid polypeptide reads, in one-letter code: Protein translocase subunit SecA (1031 aa).

Residues Gln143, 161–165 (GEGKT), and Asp662 each bind ATP. The Zn(2+) site is built by Cys1015, Cys1017, Cys1026, and Cys1027.

Belongs to the SecA family. As to quaternary structure, monomer and homodimer. Part of the essential Sec protein translocation apparatus which comprises SecA, SecYEG and auxiliary proteins SecDF. Other proteins may also be involved. Requires Zn(2+) as cofactor.

It is found in the cell inner membrane. It localises to the cytoplasm. The catalysed reaction is ATP + H2O + cellular proteinSide 1 = ADP + phosphate + cellular proteinSide 2.. In terms of biological role, part of the Sec protein translocase complex. Interacts with the SecYEG preprotein conducting channel. Has a central role in coupling the hydrolysis of ATP to the transfer of proteins into and across the cell membrane, serving as an ATP-driven molecular motor driving the stepwise translocation of polypeptide chains across the membrane. This chain is Protein translocase subunit SecA, found in Chlorobaculum tepidum (strain ATCC 49652 / DSM 12025 / NBRC 103806 / TLS) (Chlorobium tepidum).